The chain runs to 207 residues: uncharacterized protein (207 aa).

Residues 1 to 19 (MRHGLLALICWLCCVVAHS) form the signal peptide.

The protein to P.aeruginosa PA4490 and T.maritima TM0986.

This is an uncharacterized protein from Escherichia coli (strain K12).